The following is a 98-amino-acid chain: Small ribosomal subunit protein bS18 (98 aa).

Belongs to the bacterial ribosomal protein bS18 family. Part of the 30S ribosomal subunit. Forms a tight heterodimer with protein bS6.

Functionally, binds as a heterodimer with protein bS6 to the central domain of the 16S rRNA, where it helps stabilize the platform of the 30S subunit. The protein is Small ribosomal subunit protein bS18 of Flavobacterium johnsoniae (strain ATCC 17061 / DSM 2064 / JCM 8514 / BCRC 14874 / CCUG 350202 / NBRC 14942 / NCIMB 11054 / UW101) (Cytophaga johnsonae).